The chain runs to 336 residues: UDP-glucose 4-epimerase (336 aa).

NAD(+) contacts are provided by residues 11–12 (YI), 31–36 (DNLINS), 58–59 (DI), 80–84 (FAGLK), N99, S124, Y149, K153, and F178. Residues S124 and Y149 each contribute to the substrate site. Y149 functions as the Proton acceptor in the catalytic mechanism. Substrate contacts are provided by residues N179, 199 to 200 (NL), 216 to 218 (LVY), R231, and 290 to 293 (RPGD).

Belongs to the NAD(P)-dependent epimerase/dehydratase family. As to quaternary structure, homodimer. It depends on NAD(+) as a cofactor.

The catalysed reaction is UDP-alpha-D-glucose = UDP-alpha-D-galactose. It functions in the pathway carbohydrate metabolism; galactose metabolism. Its function is as follows. Involved in the metabolism of galactose. Catalyzes the conversion of UDP-galactose (UDP-Gal) to UDP-glucose (UDP-Glc) through a mechanism involving the transient reduction of NAD. This chain is UDP-glucose 4-epimerase (galE), found in Yersinia enterocolitica.